The chain runs to 469 residues: Tetratricopeptide repeat protein 38 (469 aa).

Ala-2 carries the post-translational modification N-acetylalanine. Ser-5 carries the post-translational modification Phosphoserine. TPR repeat units lie at residues Arg-108–Asp-141, Ser-180–Asp-213, and Cys-252–Ala-285.

It belongs to the TTC38 family.

The polypeptide is Tetratricopeptide repeat protein 38 (TTC38) (Pongo abelii (Sumatran orangutan)).